We begin with the raw amino-acid sequence, 174 residues long: Ribosome maturation factor RimP (174 aa).

Belongs to the RimP family.

The protein resides in the cytoplasm. Required for maturation of 30S ribosomal subunits. The polypeptide is Ribosome maturation factor RimP (Acinetobacter baylyi (strain ATCC 33305 / BD413 / ADP1)).